Here is a 298-residue protein sequence, read N- to C-terminus: WRKY transcription factor 22 (298 aa).

Disordered stretches follow at residues 75-116 (EEPR…IQHK) and 181-220 (AEHN…TYSS). Over residues 88-103 (SLSASSGSVTSKPSGS) the composition is skewed to low complexity. Positions 107–116 (RSKRRKIQHK) are enriched in basic residues. The segment at residues 122–188 (AAEALNSDVW…YTAEHNHPAP (67 aa)) is a DNA-binding region (WRKY). The span at 190–220 (HRNSLAGSTRQKPSDQQTSKSPTTTIATYSS) shows a compositional bias: polar residues.

It belongs to the WRKY group II-e family.

Its subcellular location is the nucleus. In terms of biological role, transcription factor involved in the expression of defense genes in innate immune response of plants. Interacts specifically with the W box (5'-(T)TGAC[CT]-3'), a frequently occurring elicitor-responsive cis-acting element. Activates WRKY 29, SIRK and its own promoters. This chain is WRKY transcription factor 22 (WRKY22), found in Arabidopsis thaliana (Mouse-ear cress).